Consider the following 272-residue polypeptide: Tryptophan synthase alpha chain (272 aa).

Catalysis depends on proton acceptor residues Glu49 and Glu60.

It belongs to the TrpA family. In terms of assembly, tetramer of two alpha and two beta chains.

The enzyme catalyses (1S,2R)-1-C-(indol-3-yl)glycerol 3-phosphate + L-serine = D-glyceraldehyde 3-phosphate + L-tryptophan + H2O. Its pathway is amino-acid biosynthesis; L-tryptophan biosynthesis; L-tryptophan from chorismate: step 5/5. Its function is as follows. The alpha subunit is responsible for the aldol cleavage of indoleglycerol phosphate to indole and glyceraldehyde 3-phosphate. This Legionella pneumophila (strain Corby) protein is Tryptophan synthase alpha chain.